A 215-amino-acid chain; its full sequence is ATP-dependent Clp protease proteolytic subunit 1 (215 aa).

Serine 108 (nucleophile) is an active-site residue. Histidine 133 is a catalytic residue.

The protein belongs to the peptidase S14 family. In terms of assembly, fourteen ClpP subunits assemble into 2 heptameric rings which stack back to back to give a disk-like structure with a central cavity, resembling the structure of eukaryotic proteasomes.

The protein localises to the cytoplasm. The enzyme catalyses Hydrolysis of proteins to small peptides in the presence of ATP and magnesium. alpha-casein is the usual test substrate. In the absence of ATP, only oligopeptides shorter than five residues are hydrolyzed (such as succinyl-Leu-Tyr-|-NHMec, and Leu-Tyr-Leu-|-Tyr-Trp, in which cleavage of the -Tyr-|-Leu- and -Tyr-|-Trp bonds also occurs).. Cleaves peptides in various proteins in a process that requires ATP hydrolysis. Has a chymotrypsin-like activity. Plays a major role in the degradation of misfolded proteins. In Paraburkholderia xenovorans (strain LB400), this protein is ATP-dependent Clp protease proteolytic subunit 1.